Here is a 339-residue protein sequence, read N- to C-terminus: Glyceraldehyde-3-phosphate dehydrogenase (339 aa).

NAD(+)-binding positions include 12-13, Asp39, Arg84, and Ser127; that span reads RI. Residues 157-159, Thr188, Arg203, 216-217, and Arg239 each bind D-glyceraldehyde 3-phosphate; these read SCT and TG. Cys158 functions as the Nucleophile in the catalytic mechanism. Residue Asn320 participates in NAD(+) binding.

This sequence belongs to the glyceraldehyde-3-phosphate dehydrogenase family. As to quaternary structure, homotetramer.

The protein localises to the cytoplasm. The catalysed reaction is D-glyceraldehyde 3-phosphate + phosphate + NAD(+) = (2R)-3-phospho-glyceroyl phosphate + NADH + H(+). It functions in the pathway carbohydrate degradation; glycolysis; pyruvate from D-glyceraldehyde 3-phosphate: step 1/5. Its function is as follows. Catalyzes the oxidative phosphorylation of glyceraldehyde 3-phosphate (G3P) to 1,3-bisphosphoglycerate (BPG) using the cofactor NAD. The first reaction step involves the formation of a hemiacetal intermediate between G3P and a cysteine residue, and this hemiacetal intermediate is then oxidized to a thioester, with concomitant reduction of NAD to NADH. The reduced NADH is then exchanged with the second NAD, and the thioester is attacked by a nucleophilic inorganic phosphate to produce BPG. This is Glyceraldehyde-3-phosphate dehydrogenase (gapA) from Mycobacterium avium.